A 479-amino-acid polypeptide reads, in one-letter code: mRNA export factor ICP27 homolog (479 aa).

Positions 1–15 are enriched in low complexity; it reads MVPSQRLSRTSSISS. Disordered stretches follow at residues 1–78 and 92–210; these read MVPS…SSVV and KWDL…NKPW. Residues 35-44 show a composition bias toward acidic residues; it reads TDCDMDPMEG. Basic and acidic residues predominate over residues 132–142; that stretch reads EVHGCTDESYG. Residues cysteine 354, histidine 445, cysteine 449, and cysteine 454 each contribute to the Zn(2+) site. A CHC2-type zinc finger spans residues 354–454; it reads CFLPNTRDYN…HTRDCRSASC (101 aa).

It belongs to the HHV-1 ICP27 protein family. In terms of assembly, interacts with host XPO1 and with the XPO1 export pathway components small GTPase RAN and nucleoporin NUP214. Interacts with host SPEN, OTT1 and OTT3. Interacts with host SRSF1, SRSF3, SRSF7 and SRPK1. Interacts with host DHX9; this interaction may have an inhibitory effect on virion production. Interacts (via N-terminus) with host NXF1; this interaction plays a role in mRNA export. In terms of processing, phosphorylated by cellular protein kinase CK2.

It is found in the host nucleus. The protein localises to the host cytoplasm. In terms of biological role, promotes the nuclear export of a subset of early and late viral mRNAs by interacting with mRNAs and cellular export proteins. Additionally may prevent the establishment of cellular antiviral state, by acting as an alternative splicing factor for cellular RNAs such as STAT1, resulting in a STAT1 mRNA incapable of producing the STAT1alpha isoform. This chain is mRNA export factor ICP27 homolog, found in Homo sapiens (Human).